A 190-amino-acid polypeptide reads, in one-letter code: Selenoprotein S (190 aa).

The chain crosses the membrane as a helical span at residues S28 to F48. The VCP/p97-interacting motif (VIM) stretch occupies residues R78 to Q90. The segment covering K115 to E138 has biased composition (basic and acidic residues). The tract at residues K115–G190 is disordered. At S140 the chain carries Phosphoserine. Positions R160–A174 are enriched in gly residues. Residue U189 is a non-standard amino acid, selenocysteine.

Belongs to the selenoprotein S family. As to quaternary structure, interacts with DERL1 and (via VIM motif) with VCP, suggesting that it forms a membrane complex with DERL1 that serves as a receptor for VCP. Also interacts with DERL2, DERL3 and SELENOK. The SELENOK-SELENOS complex interacts with VCP. In terms of processing, truncated SELENOS proteins produced by failed UGA/Sec decoding are ubiquitinated by the CRL2(KLHDC2) and CRL2(KLHDC3) complexes, which recognizes the glycine (Gly) at the C-terminus of truncated SELENOS proteins. Truncated SELENOS proteins produced by failed UGA/Sec decoding are also ubiquitinated by the CRL5(KLHDC1) complex. As to expression, ubiquitously expressed. Highest expression in liver and lung, with lower levels detected in spleen, kidney, brain, lymph nodes, small intestine, stomach and heart. Very low expression detected in longissimus dorsi.

It localises to the cytoplasm. Its subcellular location is the endoplasmic reticulum membrane. In terms of biological role, involved in the degradation process of misfolded endoplasmic reticulum (ER) luminal proteins. Participates in the transfer of misfolded proteins from the ER to the cytosol, where they are destroyed by the proteasome in a ubiquitin-dependent manner. Probably acts by serving as a linker between DERL1, which mediates the retrotranslocation of misfolded proteins into the cytosol, and the ATPase complex VCP, which mediates the translocation and ubiquitination. The chain is Selenoprotein S from Sus scrofa (Pig).